A 512-amino-acid chain; its full sequence is Glutathione-binding protein GsiB (512 aa).

Positions 1–26 are cleaved as a signal peptide; that stretch reads MTQFITHKWLAALGLASSIAAFPALA.

It belongs to the bacterial solute-binding protein 5 family. As to quaternary structure, the complex is composed of two ATP-binding proteins (GsiA), two transmembrane proteins (GsiC and GsiD) and a solute-binding protein (GsiB).

The protein localises to the periplasm. Its function is as follows. Part of the ABC transporter complex GsiABCD involved in glutathione import. Binds glutathione. This is Glutathione-binding protein GsiB from Salmonella choleraesuis (strain SC-B67).